Here is a 50-residue protein sequence, read N- to C-terminus: MSLLNKPKSEMTPEELQKREEEEFNTGPLSVXTQSXKTXTQVLINCRNTK.

Residues 1-36 (MSLLNKPKSEMTPEELQKREEEEFNTGPLSVXTQSX) are disordered. Serine 2 carries the N-acetylserine modification. Residues lysine 6 and lysine 8 each participate in a glycyl lysine isopeptide (Lys-Gly) (interchain with G-Cter in SUMO2) cross-link. Basic and acidic residues predominate over residues 7-21 (PKSEMTPEELQKREE). Serine 9 carries the phosphoserine modification. Position 12 is a phosphothreonine (threonine 12).

This sequence belongs to the snRNP core protein family. In terms of assembly, core component of the spliceosomal U1, U2, U4 and U5 small nuclear ribonucleoproteins (snRNPs), the building blocks of the spliceosome. Most spliceosomal snRNPs contain a common set of Sm proteins, SNRPB, SNRPD1, SNRPD2, SNRPD3, SNRPE, SNRPF and SNRPG that assemble in a heptameric protein ring on the Sm site of the small nuclear RNA to form the core snRNP. Component of the U1 snRNP. The U1 snRNP is composed of the U1 snRNA and the 7 core Sm proteins SNRPB, SNRPD1, SNRPD2, SNRPD3, SNRPE, SNRPF and SNRPG, and at least three U1 snRNP-specific proteins SNRNP70/U1-70K, SNRPA/U1-A and SNRPC/U1-C. Component of the U4/U6-U5 tri-snRNP complex composed of the U4, U6 and U5 snRNAs and at least PRPF3, PRPF4, PRPF6, PRPF8, PRPF31, SNRNP200, TXNL4A, SNRNP40, SNRPB, SNRPD1, SNRPD2, SNRPD3, SNRPE, SNRPF, SNRPG, DDX23, CD2BP2, PPIH, SNU13, EFTUD2, SART1 and USP39, plus LSM2, LSM3, LSM4, LSM5, LSM6, LSM7 and LSM8. Component of the minor spliceosome, which splices U12-type introns. Part of the SMN-Sm complex that contains SMN1, GEMIN2/SIP1, DDX20/GEMIN3, GEMIN4, GEMIN5, GEMIN6, GEMIN7, GEMIN8, STRAP/UNRIP and the Sm proteins SNRPB, SNRPD1, SNRPD2, SNRPD3, SNRPE, SNRPF and SNRPG; catalyzes core snRNPs assembly. Forms a 6S pICln-Sm complex composed of CLNS1A/pICln, SNRPD1, SNRPD2, SNRPE, SNRPF and SNRPG; ring-like structure where CLNS1A/pICln mimics additional Sm proteins and which is unable to assemble into the core snRNP. Interacts with SMN1; the interaction is direct. Interacts with GEMIN2; the interaction is direct. Interacts with SNRPD1; the interaction is direct. Interacts with SNRPF; the interaction is direct.

Its subcellular location is the cytoplasm. It is found in the cytosol. The protein localises to the nucleus. In terms of biological role, plays a role in pre-mRNA splicing as a core component of the spliceosomal U1, U2, U4 and U5 small nuclear ribonucleoproteins (snRNPs), the building blocks of the spliceosome. Component of both the pre-catalytic spliceosome B complex and activated spliceosome C complexes. As a component of the minor spliceosome, involved in the splicing of U12-type introns in pre-mRNAs. The polypeptide is Small nuclear ribonucleoprotein Sm D2 (SNRPD2) (Sus scrofa (Pig)).